Here is a 351-residue protein sequence, read N- to C-terminus: DNA polymerase IV (351 aa).

The region spanning 4–185 is the UmuC domain; sequence IIHVDMDCFF…LPLGKIPGVG (182 aa). Residues Asp-8 and Asp-103 each contribute to the Mg(2+) site. Glu-104 is an active-site residue.

Belongs to the DNA polymerase type-Y family. As to quaternary structure, monomer. Requires Mg(2+) as cofactor.

It localises to the cytoplasm. The catalysed reaction is DNA(n) + a 2'-deoxyribonucleoside 5'-triphosphate = DNA(n+1) + diphosphate. Poorly processive, error-prone DNA polymerase involved in untargeted mutagenesis. Copies undamaged DNA at stalled replication forks, which arise in vivo from mismatched or misaligned primer ends. These misaligned primers can be extended by PolIV. Exhibits no 3'-5' exonuclease (proofreading) activity. May be involved in translesional synthesis, in conjunction with the beta clamp from PolIII. The sequence is that of DNA polymerase IV from Cronobacter sakazakii (strain ATCC BAA-894) (Enterobacter sakazakii).